We begin with the raw amino-acid sequence, 261 residues long: Putative cytochrome YdhU (261 aa).

Residues 25–45 (FWPVWLIIAGVLLVGMWLVLG) form a helical membrane-spanning segment. His77 lines the heme b pocket. Helical transmembrane passes span 81 to 101 (ALLFVLLLASGLINHFAMVGA), 108 to 128 (VAVHEVCGFLLLACWLGFVLI), and 182 to 202 (VAYVGVMYGLLPLLLLTGLLC). His111 is a binding site for heme b. Residues His223 and His237 each coordinate heme b. A helical transmembrane segment spans residues 224–244 (FALAFISLFFIFGHLYLCTTG). An a menaquinone-binding site is contributed by His237.

The protein belongs to the PhsC family. Requires heme as cofactor.

The protein localises to the cell inner membrane. The polypeptide is Putative cytochrome YdhU (ydhU) (Escherichia coli (strain K12)).